An 89-amino-acid polypeptide reads, in one-letter code: Putative regulatory protein Nther_1328 (89 aa).

Belongs to the RemA family.

The chain is Putative regulatory protein Nther_1328 from Natranaerobius thermophilus (strain ATCC BAA-1301 / DSM 18059 / JW/NM-WN-LF).